The chain runs to 322 residues: MAIHGYDGKAALQQVNQFWSMLDDMCENNPEEYRSFIQRQMREGAEFHSPPQSHTCIRTAVLGANEGILYINICGWKRVPAPASDKEPVPVCGGRMEKLTEEKEEYSVVDAAFNPEVLQTTEKDKEEKENLCLLALNFIQQQHNLTLSQHYKLTNDKIKGSIRDTKQRLMSTKTCKSTLNGSQSEPAPSLLQQICSLQNTESDEDSSIELSIEQERKPARSGLIEVISSTELDQPQPQLPKHQLTICPDGNGSSRILQLCVELPGVRSVSQCQLRISEDDILLEVEDIYYLLLPFPELVKEETCTAKFNKKKQTLNVTVNVL.

It belongs to the PIH1 family.

This is PIH1 domain-containing protein 2 (pih1d2) from Danio rerio (Zebrafish).